Consider the following 183-residue polypeptide: 2-hydroxy-1,4-benzoquinone reductase (183 aa).

FMN contacts are provided by residues 11–18, 77–80, and S113; these read SLRRDSFN and EYNR.

Belongs to the SsuE family. In terms of assembly, homotetramer. It depends on FMN as a cofactor.

The catalysed reaction is 2-hydroxy-1,4-benzoquinone + NADH + 2 H(+) = benzene-1,2,4-triol + NAD(+). Its function is as follows. Involved in the metabolism of 4-aminophenol. Catalyzes the reduction of the auto-oxidation product 2-hydroxy-1,4-benzoquinone back to hydroxyquinol. Has a broad substrate specificity toward benzoquinones, converting them to the corresponding 1,4-benzenediols. The chain is 2-hydroxy-1,4-benzoquinone reductase from Burkholderia sp.